The following is a 383-amino-acid chain: Paralemmin-1 (383 aa).

The residue at position 1 (Met1) is an N-acetylmethionine. Residues Asp7 to Gly101 adopt a coiled-coil conformation. Disordered regions lie at residues Arg51–Met164, Thr242–Gln293, and Ser333–Lys374. Residues Asp69 to Asp96 show a composition bias toward basic and acidic residues. 3 positions are modified to phosphoserine: Ser116, Ser122, and Ser124. Polar residues predominate over residues Glu133–Leu143. Thr141, Thr145, and Thr153 each carry phosphothreonine. Residues Ser157 and Ser161 each carry the phosphoserine modification. Residue Thr242 is modified to Phosphothreonine. Ser244 carries the phosphoserine modification. Residues Gly257–Thr273 show a composition bias toward basic and acidic residues. Ser345 carries the phosphoserine modification. The segment covering Gln357–Thr367 has biased composition (polar residues). Thr361, Thr362, and Thr363 each carry phosphothreonine. Ser365 is subject to Phosphoserine. A Phosphothreonine modification is found at Thr367. Residues Cys377 and Cys379 are each lipidated (S-palmitoyl cysteine). Cys380 carries the cysteine methyl ester modification. Residue Cys380 is the site of S-farnesyl cysteine attachment. Residues Ser381–Met383 constitute a propeptide, removed in mature form.

It belongs to the paralemmin family. In terms of assembly, interacts with dopamine receptor DRD3. As to expression, expressed in neurons cells of neuropil-rich areas of the brain, in the Purkinje cells of the cerebellum, in cells of the cerebral cortex, hippocampus, brainstem nuclei and glial processes and sheaths. Expressed in the medulla of the adrenal chromaffin cells and renal duct cells (at protein level).

It localises to the cell membrane. The protein resides in the cell projection. Its subcellular location is the filopodium membrane. The protein localises to the axon. It is found in the dendrite. It localises to the dendritic spine. The protein resides in the basolateral cell membrane. Its subcellular location is the apicolateral cell membrane. Functionally, involved in plasma membrane dynamics and cell process formation. Necessary for axonal and dendritic filopodia induction, for dendritic spine maturation and synapse formation in a palmitoylation-dependent manner. In Rattus norvegicus (Rat), this protein is Paralemmin-1 (Palm).